Here is an 807-residue protein sequence, read N- to C-terminus: Protein FAR1-RELATED SEQUENCE 2 (807 aa).

In terms of domain architecture, FAR1 spans 52–138 (YFYREYARSV…VKEHNHEICP (87 aa)). The 97-residue stretch at 219 to 315 (VVLFDTFYVR…CLWSVLSKIS (97 aa)) folds into the MULE domain. The SWIM-type zinc finger occupies 499–535 (FFVALNNELLDACCSCHLFEYQGFLCKHAILVLQSAD). A coiled-coil region spans residues 660-680 (EDATNRSEELRQETEQVSSRA). Residues 788–798 (GSSQFQGSDSS) are compositionally biased toward polar residues. The interval 788 to 807 (GSSQFQGSDSSHPSDHRLSN) is disordered.

This sequence belongs to the FHY3/FAR1 family. In terms of tissue distribution, expressed in hypocotyls, rosette and cauline leaves, inflorescences stems, flowers and siliques.

The protein localises to the nucleus. In terms of biological role, putative transcription activator involved in regulating light control of development. The polypeptide is Protein FAR1-RELATED SEQUENCE 2 (FRS2) (Arabidopsis thaliana (Mouse-ear cress)).